The primary structure comprises 351 residues: Small ribosomal subunit biogenesis GTPase RsgA (351 aa).

A compositionally biased stretch (basic residues) spans methionine 1–arginine 12. The segment at methionine 1 to glycine 37 is disordered. Over residues arginine 13–methionine 31 the composition is skewed to basic and acidic residues. The region spanning tyrosine 112–phenylalanine 274 is the CP-type G domain. Residues asparagine 160–aspartate 163 and glycine 214–serine 222 each bind GTP. Zn(2+) contacts are provided by cysteine 298, cysteine 303, histidine 305, and cysteine 311.

Belongs to the TRAFAC class YlqF/YawG GTPase family. RsgA subfamily. Monomer. Associates with 30S ribosomal subunit, binds 16S rRNA. Zn(2+) serves as cofactor.

Its subcellular location is the cytoplasm. Its function is as follows. One of several proteins that assist in the late maturation steps of the functional core of the 30S ribosomal subunit. Helps release RbfA from mature subunits. May play a role in the assembly of ribosomal proteins into the subunit. Circularly permuted GTPase that catalyzes slow GTP hydrolysis, GTPase activity is stimulated by the 30S ribosomal subunit. This Photorhabdus laumondii subsp. laumondii (strain DSM 15139 / CIP 105565 / TT01) (Photorhabdus luminescens subsp. laumondii) protein is Small ribosomal subunit biogenesis GTPase RsgA.